We begin with the raw amino-acid sequence, 204 residues long: Imidazoleglycerol-phosphate dehydratase (204 aa).

Positions 183–204 (DPRMDGITPSTKGTLSESGDSQ) are disordered. A compositionally biased stretch (polar residues) spans 190–204 (TPSTKGTLSESGDSQ).

Belongs to the imidazoleglycerol-phosphate dehydratase family.

It is found in the cytoplasm. It carries out the reaction D-erythro-1-(imidazol-4-yl)glycerol 3-phosphate = 3-(imidazol-4-yl)-2-oxopropyl phosphate + H2O. Its pathway is amino-acid biosynthesis; L-histidine biosynthesis; L-histidine from 5-phospho-alpha-D-ribose 1-diphosphate: step 6/9. The sequence is that of Imidazoleglycerol-phosphate dehydratase from Alcanivorax borkumensis (strain ATCC 700651 / DSM 11573 / NCIMB 13689 / SK2).